A 240-amino-acid polypeptide reads, in one-letter code: Penton protein H240R (240 aa).

The protein belongs to the asfivirus H240R family.

The protein localises to the virion. Functionally, forms the penton at the fivefold vertices of the icosahedral capsid. Together with the minor capsid proteins (p17, p49, and M1249L), forms a complicated network immediately below the outer capsid shell, stabilizing the whole capsid. This chain is Penton protein H240R, found in African swine fever virus (isolate Tick/South Africa/Pretoriuskop Pr4/1996) (ASFV).